The primary structure comprises 228 residues: Octanoyltransferase (228 aa).

A BPL/LPL catalytic domain is found at G31 to F212. Residues R76–H83, A143–G145, and G156–A158 each bind substrate. C174 (acyl-thioester intermediate) is an active-site residue.

Belongs to the LipB family.

It localises to the cytoplasm. The catalysed reaction is octanoyl-[ACP] + L-lysyl-[protein] = N(6)-octanoyl-L-lysyl-[protein] + holo-[ACP] + H(+). Its pathway is protein modification; protein lipoylation via endogenous pathway; protein N(6)-(lipoyl)lysine from octanoyl-[acyl-carrier-protein]: step 1/2. Functionally, catalyzes the transfer of endogenously produced octanoic acid from octanoyl-acyl-carrier-protein onto the lipoyl domains of lipoate-dependent enzymes. Lipoyl-ACP can also act as a substrate although octanoyl-ACP is likely to be the physiological substrate. The sequence is that of Octanoyltransferase from Thermoanaerobacter pseudethanolicus (strain ATCC 33223 / 39E) (Clostridium thermohydrosulfuricum).